Reading from the N-terminus, the 349-residue chain is UDP-N-acetylenolpyruvoylglucosamine reductase (349 aa).

Residues 26-197 (FDARARVAAR…VAVTFRLPKA (172 aa)) form the FAD-binding PCMH-type domain. Residue Arg173 is part of the active site. The active-site Proton donor is the Ser249. Glu345 is a catalytic residue.

This sequence belongs to the MurB family. Requires FAD as cofactor.

It localises to the cytoplasm. The catalysed reaction is UDP-N-acetyl-alpha-D-muramate + NADP(+) = UDP-N-acetyl-3-O-(1-carboxyvinyl)-alpha-D-glucosamine + NADPH + H(+). It functions in the pathway cell wall biogenesis; peptidoglycan biosynthesis. Its function is as follows. Cell wall formation. The polypeptide is UDP-N-acetylenolpyruvoylglucosamine reductase (Burkholderia pseudomallei (strain 1710b)).